The primary structure comprises 495 residues: Methyl viologen resistance protein SmvA (495 aa).

Helical transmembrane passes span 5–25, 44–64, 73–93, 96–116, 135–155, 158–178, 192–212, 220–240, 260–280, 299–319, 327–347, 357–377, 391–411, and 469–489; these read WLTLVIIVLVYIPVAIDATVL, LWIIDIYSLVMAGMVLPMGAL, LLMLGGTLFGLASLAAAFSHT, WLIATRVLLAIGAAMIVPATL, VWAAVGSGGAAFGPLIGGILL, FYWGSVFLINVPIVLVVMGLT, PLNLGHAVMLIIAILLLVYSA, LSLWVISFTLLTGALLLGLFI, IILSGVVMAMTAMITLVGFEL, VFMLPVMVASGFSGPIAGVLV, VATGGMALSALSFYGLAMTDF, LMALLGFSAASALLASTSAIM, IETMAYELGAGLGIAIFGLLL, and VALSSAGSMLLLLAVGMWFSL.

The protein belongs to the major facilitator superfamily. TCR/Tet family.

The protein resides in the cell inner membrane. Its function is as follows. Major efflux pump for acriflavine and other quaternary ammonium compounds (QACs). Also required for resistance to methyl viologen. This Salmonella typhimurium (strain LT2 / SGSC1412 / ATCC 700720) protein is Methyl viologen resistance protein SmvA (smvA).